Consider the following 225-residue polypeptide: Uracil-DNA glycosylase (225 aa).

Residue Asp-68 is the Proton acceptor of the active site.

The protein belongs to the uracil-DNA glycosylase (UDG) superfamily. UNG family.

Its subcellular location is the cytoplasm. The enzyme catalyses Hydrolyzes single-stranded DNA or mismatched double-stranded DNA and polynucleotides, releasing free uracil.. Functionally, excises uracil residues from the DNA which can arise as a result of misincorporation of dUMP residues by DNA polymerase or due to deamination of cytosine. The chain is Uracil-DNA glycosylase from Parafrankia sp. (strain EAN1pec).